We begin with the raw amino-acid sequence, 247 residues long: tRNA pseudouridine synthase A (247 aa).

The active-site Nucleophile is the D53. Y112 is a binding site for substrate.

Belongs to the tRNA pseudouridine synthase TruA family. Homodimer.

The catalysed reaction is uridine(38/39/40) in tRNA = pseudouridine(38/39/40) in tRNA. In terms of biological role, formation of pseudouridine at positions 38, 39 and 40 in the anticodon stem and loop of transfer RNAs. This chain is tRNA pseudouridine synthase A, found in Anaplasma marginale (strain St. Maries).